The following is a 356-amino-acid chain: Protein RecA (356 aa).

68-75 (GQESSGKT) provides a ligand contact to ATP.

This sequence belongs to the RecA family.

The protein localises to the cytoplasm. In terms of biological role, can catalyze the hydrolysis of ATP in the presence of single-stranded DNA, the ATP-dependent uptake of single-stranded DNA by duplex DNA, and the ATP-dependent hybridization of homologous single-stranded DNAs. It interacts with LexA causing its activation and leading to its autocatalytic cleavage. The chain is Protein RecA from Thermotoga maritima (strain ATCC 43589 / DSM 3109 / JCM 10099 / NBRC 100826 / MSB8).